The following is a 192-amino-acid chain: Succinate dehydrogenase cytochrome b560 subunit, mitochondrial (192 aa).

The N-terminal 27 residues, 1–27 (MFGRTLNTFTSRNAPLVRNFDKFIVNN), are a transit peptide targeting the mitochondrion. At 48-83 (YSTQAKKPFTITEKRIDELKTPYQPTSPHLTIYKFP) the chain is on the mitochondrial matrix side. Residues 84 to 113 (LPAVMSIMHRATGICLALGITGLAGVTLFA) form a helical membrane-spanning segment. At 114–131 (PHDAIHYIQLLHTQYPAL) the chain is on the mitochondrial intermembrane side. The helical transmembrane segment at 132–156 (VYPAKFAVALPLTYHFCTGVRHIIW) threads the bilayer. Residue His-146 coordinates heme b. Over 157 to 164 (DETVKGLS) the chain is Mitochondrial matrix. The helical transmembrane segment at 165–186 (ISQIESSGKVLLAVVAVLSTIF) threads the bilayer. At 187–189 (TFV) the chain is on the mitochondrial intermembrane side.

Belongs to the cytochrome b560 family. In terms of assembly, component of complex II composed of four subunits: the flavoprotein (FP) sdha, iron-sulfur protein (IP) sdhb, and a cytochrome b560 composed of sdhc and sdhd. It depends on heme b as a cofactor.

The protein localises to the mitochondrion inner membrane. Its pathway is carbohydrate metabolism; tricarboxylic acid cycle. Its function is as follows. Membrane-anchoring subunit of succinate dehydrogenase (SDH) that is involved in complex II of the mitochondrial electron transport chain and is responsible for transferring electrons from succinate to ubiquinone (coenzyme Q). The sequence is that of Succinate dehydrogenase cytochrome b560 subunit, mitochondrial (sdhC) from Dictyostelium discoideum (Social amoeba).